Here is a 467-residue protein sequence, read N- to C-terminus: tRNA-2-methylthio-N(6)-dimethylallyladenosine synthase (467 aa).

The region spanning 4 to 124 (RKLFIKSYGC…LPEMVAKVER (121 aa)) is the MTTase N-terminal domain. 6 residues coordinate [4Fe-4S] cluster: C13, C49, C87, C161, C165, and C168. The Radical SAM core domain maps to 147–379 (QAHGPSAFLS…QARLVEIQQA (233 aa)). The 63-residue stretch at 382 to 444 (QACVGRPMDV…SNSLAARLVE (63 aa)) folds into the TRAM domain.

Belongs to the methylthiotransferase family. MiaB subfamily. Monomer. [4Fe-4S] cluster serves as cofactor.

The protein localises to the cytoplasm. It catalyses the reaction N(6)-dimethylallyladenosine(37) in tRNA + (sulfur carrier)-SH + AH2 + 2 S-adenosyl-L-methionine = 2-methylsulfanyl-N(6)-dimethylallyladenosine(37) in tRNA + (sulfur carrier)-H + 5'-deoxyadenosine + L-methionine + A + S-adenosyl-L-homocysteine + 2 H(+). In terms of biological role, catalyzes the methylthiolation of N6-(dimethylallyl)adenosine (i(6)A), leading to the formation of 2-methylthio-N6-(dimethylallyl)adenosine (ms(2)i(6)A) at position 37 in tRNAs that read codons beginning with uridine. In Rhodospirillum rubrum (strain ATCC 11170 / ATH 1.1.1 / DSM 467 / LMG 4362 / NCIMB 8255 / S1), this protein is tRNA-2-methylthio-N(6)-dimethylallyladenosine synthase.